Reading from the N-terminus, the 249-residue chain is Ubiquinone biosynthesis protein COQ4 homolog, mitochondrial (249 aa).

Residues His-134, Asp-135, His-138, and Glu-150 each coordinate Zn(2+).

The protein belongs to the COQ4 family. As to quaternary structure, component of a multi-subunit COQ enzyme complex. Zn(2+) is required as a cofactor.

It localises to the mitochondrion inner membrane. The enzyme catalyses a 4-hydroxy-3-methoxy-5-(all-trans-polyprenyl)benzoate + H(+) = a 2-methoxy-6-(all-trans-polyprenyl)phenol + CO2. The protein operates within cofactor biosynthesis; ubiquinone biosynthesis. Its function is as follows. Lyase that catalyzes the C1-decarboxylation of 4-hydroxy-3-methoxy-5-(all-trans-polyprenyl)benzoic acid into 2-methoxy-6-(all-trans-polyprenyl)phenol during ubiquinone biosynthesis. This is Ubiquinone biosynthesis protein COQ4 homolog, mitochondrial from Trypanosoma brucei brucei (strain 927/4 GUTat10.1).